The following is a 196-amino-acid chain: Guanylate kinase (196 aa).

A disordered region spans residues 1–24 (MPVESGAGNDQPKRLTVLSGPSGV). The Guanylate kinase-like domain maps to 13–191 (KRLTVLSGPS…VCDELLALIA (179 aa)). 20-27 (GPSGVGKS) lines the ATP pocket.

It belongs to the guanylate kinase family.

It localises to the cytoplasm. The enzyme catalyses GMP + ATP = GDP + ADP. Essential for recycling GMP and indirectly, cGMP. The protein is Guanylate kinase of Thermobifida fusca (strain YX).